The sequence spans 419 residues: Sulfate adenylyltransferase (419 aa).

The protein belongs to the sulfate adenylyltransferase family.

The enzyme catalyses sulfate + ATP + H(+) = adenosine 5'-phosphosulfate + diphosphate. It participates in sulfur metabolism; hydrogen sulfide biosynthesis; sulfite from sulfate: step 1/3. This is Sulfate adenylyltransferase from Psychrobacter sp. (strain PRwf-1).